The chain runs to 277 residues: Putative acetylornithine deacetylase (277 aa).

The enzyme catalyses N(2)-acetyl-L-ornithine + H2O = L-ornithine + acetate. Its pathway is amino-acid biosynthesis; L-arginine biosynthesis; L-ornithine from N(2)-acetyl-L-ornithine (linear): step 1/1. This Leptospira biflexa protein is Putative acetylornithine deacetylase (argE).